Here is a 1115-residue protein sequence, read N- to C-terminus: Integrin alpha-PS3 (1115 aa).

The first 24 residues, 1 to 24 (MNAESTMFPHIFLALLALISHIEA), serve as a signal peptide directing secretion. Over 25-1054 (FNFMPRPSRV…PNIISKHQET (1030 aa)) the chain is Extracellular. FG-GAP repeat units follow at residues 39 to 99 (KHLK…VCSP), 113 to 174 (SEYT…STPQ), 193 to 246 (DNGN…VDNP), 278 to 335 (IPTP…GKSI), 336 to 397 (HKYH…FNFE), 398 to 453 (RQIL…GLRD), and 460 to 522 (DAPS…SESR). N-linked (GlcNAc...) asparagine glycosylation is found at Asn-46, Asn-82, and Asn-166. The N-linked (GlcNAc...) asparagine glycan is linked to Asn-438. N-linked (GlcNAc...) asparagine glycans are attached at residues Asn-696, Asn-845, Asn-868, and Asn-964. Residues 1055–1075 (GLPIWIIIVSVIGGLLLLSAI) form a helical membrane-spanning segment. The Cytoplasmic segment spans residues 1076-1115 (SYLLYKFGFFNRTKKDELDRLVQQNPVEPEAENLNSGGNN).

Belongs to the integrin alpha chain family. In terms of assembly, heterodimer of an alpha and a beta subunit. The alpha subunit is composed of a heavy and a light chain linked by a disulfide bond. Interacts with mys/beta-PS and Itgbn. As to expression, expressed in embryonic and larval hemocytes (at protein level). Expressed in tissues undergoing invagination, tissue movement and morphogenesis such as salivary gland, trachea, midgut endoderm, dorsal vessel, midline of the ventral nerve cord, amnioserosa and the amnioproctodeal invagination. Expressed in the mushroom body neuropil, brain areas that contain mushroom body processes in synaptic contact with other neurons. In egg chambers, expressed in border cells, in stretch cells and in dorsal appendage primordia.

It localises to the apical cell membrane. It is found in the lateral cell membrane. The protein resides in the cytoplasm. Its function is as follows. Integrin alpha-PS3/beta-PS is a receptor for laminin. Also binds to wb. Important during embryogenesis for the development of the trachea, dorsal vessel and salivary gland, as well as for dorsal closure. Required for short-term memory processes. Minor involvement in the establishment of the oocyte anterior-posterior length. Plays a role in timely border cell migration during oogenesis, probably mediated by JNK signaling. Integrin alpha-PS3/Itgbn is required for effective phagocytosis of apoptotic cells during embryonic development and for the phagocytic elimination of S.aureus by mediating the binding of S.aureus peptidoglycan to larval hemocytes, which probably activates a signaling pathway involving Rac1 and Rac2. Integrin alpha-PS3/Itgbn also regulates Fak activity during neuromuscular junction (NMJ) growth and is required for its activation in presynapsis of NMJs. Seems to be dispensable for major morphogenetic processes. This is Integrin alpha-PS3 (scb) from Drosophila melanogaster (Fruit fly).